We begin with the raw amino-acid sequence, 184 residues long: ATP synthase subunit b, chloroplastic (184 aa).

Residues 31–53 (LINLSVVLGVLIYFGKGVLSNLL) form a helical membrane-spanning segment.

Belongs to the ATPase B chain family. In terms of assembly, F-type ATPases have 2 components, F(1) - the catalytic core - and F(0) - the membrane proton channel. F(1) has five subunits: alpha(3), beta(3), gamma(1), delta(1), epsilon(1). F(0) has four main subunits: a(1), b(1), b'(1) and c(10-14). The alpha and beta chains form an alternating ring which encloses part of the gamma chain. F(1) is attached to F(0) by a central stalk formed by the gamma and epsilon chains, while a peripheral stalk is formed by the delta, b and b' chains.

Its subcellular location is the plastid. The protein localises to the chloroplast thylakoid membrane. In terms of biological role, f(1)F(0) ATP synthase produces ATP from ADP in the presence of a proton or sodium gradient. F-type ATPases consist of two structural domains, F(1) containing the extramembraneous catalytic core and F(0) containing the membrane proton channel, linked together by a central stalk and a peripheral stalk. During catalysis, ATP synthesis in the catalytic domain of F(1) is coupled via a rotary mechanism of the central stalk subunits to proton translocation. Functionally, component of the F(0) channel, it forms part of the peripheral stalk, linking F(1) to F(0). The chain is ATP synthase subunit b, chloroplastic from Cycas taitungensis (Prince sago).